Reading from the N-terminus, the 652-residue chain is DNA ligase (652 aa).

NAD(+)-binding positions include 29–33, 78–79, and E107; these read DSQYD and SL. The active-site N6-AMP-lysine intermediate is the K109. Positions 130, 164, 278, and 302 each coordinate NAD(+). Zn(2+)-binding residues include C395, C398, C413, and C418. Positions 577-652 constitute a BRCT domain; sequence STDAQLSGLT…IQDEDWLLNL (76 aa).

It belongs to the NAD-dependent DNA ligase family. LigA subfamily. Requires Mg(2+) as cofactor. The cofactor is Mn(2+).

It catalyses the reaction NAD(+) + (deoxyribonucleotide)n-3'-hydroxyl + 5'-phospho-(deoxyribonucleotide)m = (deoxyribonucleotide)n+m + AMP + beta-nicotinamide D-nucleotide.. In terms of biological role, DNA ligase that catalyzes the formation of phosphodiester linkages between 5'-phosphoryl and 3'-hydroxyl groups in double-stranded DNA using NAD as a coenzyme and as the energy source for the reaction. It is essential for DNA replication and repair of damaged DNA. The polypeptide is DNA ligase (Streptococcus agalactiae serotype III (strain NEM316)).